Here is a 187-residue protein sequence, read N- to C-terminus: Nucleoside-triphosphatase THEP1 (187 aa).

ATP contacts are provided by residues Gly9–Thr16 and Leu100–Gly107.

This sequence belongs to the THEP1 NTPase family.

It carries out the reaction a ribonucleoside 5'-triphosphate + H2O = a ribonucleoside 5'-diphosphate + phosphate + H(+). Its function is as follows. Has nucleotide phosphatase activity towards ATP, GTP, CTP, TTP and UTP. May hydrolyze nucleoside diphosphates with lower efficiency. The protein is Nucleoside-triphosphatase THEP1 of Hyperthermus butylicus (strain DSM 5456 / JCM 9403 / PLM1-5).